A 242-amino-acid chain; its full sequence is Uridylate kinase (242 aa).

An ATP-binding site is contributed by 17 to 20 (KLSG). A UMP-binding site is contributed by Gly-59. Gly-60 and Arg-64 together coordinate ATP. UMP-binding positions include Asp-79 and 140–147 (LGNPFFTT). 3 residues coordinate ATP: Thr-167, Tyr-173, and Asp-176.

Belongs to the UMP kinase family. Homohexamer.

It is found in the cytoplasm. The enzyme catalyses UMP + ATP = UDP + ADP. The protein operates within pyrimidine metabolism; CTP biosynthesis via de novo pathway; UDP from UMP (UMPK route): step 1/1. With respect to regulation, inhibited by UTP. In terms of biological role, catalyzes the reversible phosphorylation of UMP to UDP. The chain is Uridylate kinase from Buchnera aphidicola subsp. Baizongia pistaciae (strain Bp).